The chain runs to 132 residues: Small ribosomal subunit protein uS11 (132 aa).

It belongs to the universal ribosomal protein uS11 family. Part of the 30S ribosomal subunit.

Functionally, located on the platform of the 30S subunit. The chain is Small ribosomal subunit protein uS11 from Thermoplasma volcanium (strain ATCC 51530 / DSM 4299 / JCM 9571 / NBRC 15438 / GSS1).